Reading from the N-terminus, the 948-residue chain is Zinc finger CCCH domain-containing protein 3 (948 aa).

Disordered stretches follow at residues 25 to 108 (HGNA…VPQQ), 121 to 219 (QNVV…RRTV), 265 to 296 (VDAG…REAS), and 336 to 493 (NVCK…LKKT). Residues 56 to 74 (RPSRRGYSSHHGPSWRKKY) are compositionally biased toward basic residues. Low complexity predominate over residues 128 to 141 (KPPSKSGSASASGA). The span at 157–166 (QRPREGEGEP) shows a compositional bias: basic and acidic residues. A compositionally biased stretch (low complexity) spans 372-398 (SAPSKYKWKASSPSASSSSSFRWQSEA). Residues 405-415 (SQLSPVLSRSP) show a composition bias toward polar residues. Ser408 carries the phosphoserine modification. The segment covering 441–452 (VKSRTKIIRRRS) has biased composition (basic residues). 5 C3H1-type zinc fingers span residues 667 to 695 (EKRK…HDPE), 699 to 722 (VCTR…HHVS), 723 to 749 (KEKM…HVYV), 750 to 777 (SRKA…HTLL), and 778 to 800 (CPDF…HRTQ). Disordered stretches follow at residues 798–891 (RTQK…HEAP) and 913–948 (ISLQ…KPRL). A compositionally biased stretch (polar residues) spans 834–846 (SASQRPTRQTPSS). Composition is skewed to low complexity over residues 847–856 (AALTAAAVAA) and 864–885 (SASP…PPAS). Residues Ser918 and Ser920 each carry the phosphoserine modification.

Interacts with SMAD1, SMAD3, SMAD4, CPSF2 and CPSF3.

The protein localises to the nucleus. Its function is as follows. Required for the export of polyadenylated mRNAs from the nucleus. Enhances ACVR1B-induced SMAD-dependent transcription. Binds to single-stranded DNA but not to double-stranded DNA in vitro. Involved in RNA cleavage. The chain is Zinc finger CCCH domain-containing protein 3 (ZC3H3) from Homo sapiens (Human).